We begin with the raw amino-acid sequence, 173 residues long: Trafficking regulator of GLUT4 1 (173 aa).

Polar residues predominate over residues 1–17 (MANPVQPQLQDPGSTSP). The segment at 1–22 (MANPVQPQLQDPGSTSPLDLPE) is disordered. Over 1–102 (MANPVQPQLQ…QDQEAPKDYL (102 aa)) the chain is Cytoplasmic. 6 positions are modified to phosphoserine: Ser-16, Ser-43, Ser-45, Ser-70, Ser-84, and Ser-85. Residues 103-123 (VLAIASCFCPVWPLNLIPLIF) constitute an intramembrane region (helical). Over 124–150 (SIMSRSSVQQGDLDGARRLGRLARLLS) the chain is Cytoplasmic. A helical transmembrane segment spans residues 151-171 (ITFIILGIVIIIVAVTVNFTV). Residues 172–173 (PK) lie on the Extracellular side of the membrane.

It belongs to the CD225/Dispanin family. In terms of assembly, interacts with SLC2A4; the interaction is required for proper SLC2A4 reacycling after insulin stimulation. As to expression, present in adipose tissue and undetectable in other tissues (at protein level).

It localises to the cell membrane. The protein localises to the endomembrane system. It is found in the cytoplasm. Its subcellular location is the perinuclear region. In terms of biological role, regulates insulin-mediated adipose tissue glucose uptake and transport by modulation of SLC2A4 recycling. Not required for SLC2A4 membrane fusion upon an initial stimulus, but rather is necessary for proper protein recycling during prolonged insulin stimulation. In Rattus norvegicus (Rat), this protein is Trafficking regulator of GLUT4 1.